Reading from the N-terminus, the 301-residue chain is Glycine--tRNA ligase alpha subunit (301 aa).

This sequence belongs to the class-II aminoacyl-tRNA synthetase family. As to quaternary structure, tetramer of two alpha and two beta subunits.

Its subcellular location is the cytoplasm. The enzyme catalyses tRNA(Gly) + glycine + ATP = glycyl-tRNA(Gly) + AMP + diphosphate. The sequence is that of Glycine--tRNA ligase alpha subunit from Neisseria meningitidis serogroup C (strain 053442).